The primary structure comprises 188 residues: CASP-like protein 4B1 (188 aa).

The segment at 1–34 (MTNPDNMKPVEATDVESAAEKTSEPTPASGTSTI) is disordered. The Cytoplasmic portion of the chain corresponds to 1–46 (MTNPDNMKPVEATDVESAAEKTSEPTPASGTSTITQRWKREDLIKK). Over residues 24-34 (EPTPASGTSTI) the composition is skewed to polar residues. A helical membrane pass occupies residues 47-67 (ASPITRGICLLFSLIAFLIMV). Residues 68–84 (SNKHGYGRNFNDYEEYR) lie on the Extracellular side of the membrane. The helical transmembrane segment at 85–105 (YVLAISIISTLYTAWQTFAHF) threads the bilayer. Over 106-124 (SKREIFDRRTSILVDFSGD) the chain is Cytoplasmic. The helical transmembrane segment at 125-145 (QIVAYLLISAASSAIPLTNIF) threads the bilayer. At 146-156 (REGQDNIFTDS) the chain is on the extracellular side. Residues 157 to 177 (AASAISMAIFAFIALALSALF) traverse the membrane as a helical segment. The Cytoplasmic portion of the chain corresponds to 178–188 (SGYKLSTHSFI).

This sequence belongs to the Casparian strip membrane proteins (CASP) family. As to quaternary structure, homodimer and heterodimers.

It is found in the cell membrane. The chain is CASP-like protein 4B1 from Arabidopsis thaliana (Mouse-ear cress).